The sequence spans 292 residues: MSKISAKLVKELRDRTGLGMMECKKALEETNGDVEQAIDNLRKSGQAKAAKKAGNIAADGAIVIAQEGNKAILLEVNCQTDFVAKDDNFTEFANKVAELALANNTTDVAAISELDYGNGQSVEEARVALVQKIGENIQVRRAKIIEGDNLASYRHGLRIGVVVSSEGGQEDSGKNLAMHIAAFNPVAVNDTDVPADILAREKDIAEAKARESGKPDNIIEKMIEGGLRKYLDEVVLVRQAYVMDNEKKVGDVLKADGVTVKDFVRFEVGEGIEKKQEDFAAEVAAAQAAAAQ.

Positions 80–83 are involved in Mg(2+) ion dislocation from EF-Tu; that stretch reads TDFV.

Belongs to the EF-Ts family.

The protein resides in the cytoplasm. In terms of biological role, associates with the EF-Tu.GDP complex and induces the exchange of GDP to GTP. It remains bound to the aminoacyl-tRNA.EF-Tu.GTP complex up to the GTP hydrolysis stage on the ribosome. The sequence is that of Elongation factor Ts from Psychrobacter sp. (strain PRwf-1).